Reading from the N-terminus, the 420-residue chain is Carbohydrate sulfotransferase 12 (420 aa).

The Cytoplasmic portion of the chain corresponds to Met-1–Arg-5. A helical; Signal-anchor for type II membrane protein transmembrane segment spans residues Leu-6–Trp-26. Residues Asp-27 to Val-420 are Lumenal-facing. Residues Asn-76 and Asn-139 are each glycosylated (N-linked (GlcNAc...) asparagine). Position 176–182 (Pro-176–Asn-182) interacts with 3'-phosphoadenylyl sulfate. The N-linked (GlcNAc...) asparagine glycan is linked to Asn-215. A 3'-phosphoadenylyl sulfate-binding site is contributed by Arg-251–Ser-259. N-linked (GlcNAc...) asparagine glycosylation is found at Asn-286 and Asn-376.

The protein belongs to the sulfotransferase 2 family.

It is found in the golgi apparatus membrane. The enzyme catalyses chondroitin beta-D-glucuronate + n 3'-phosphoadenylyl sulfate = chondroitin 4'-sulfate + n adenosine 3',5'-bisphosphate + n H(+). Functionally, catalyzes the transfer of sulfate to position 4 of the N-acetylgalactosamine (GalNAc) residue of chondroitin and desulfated dermatan sulfate. Chondroitin sulfate constitutes the predominant proteoglycan present in cartilage and is distributed on the surfaces of many cells and extracellular matrices. This is Carbohydrate sulfotransferase 12 (chst12) from Xenopus laevis (African clawed frog).